The following is a 336-amino-acid chain: Tetraacyldisaccharide 4'-kinase (336 aa).

60 to 67 contacts ATP; that stretch reads TVGGTGKT.

The protein belongs to the LpxK family.

The catalysed reaction is a lipid A disaccharide + ATP = a lipid IVA + ADP + H(+). The protein operates within glycolipid biosynthesis; lipid IV(A) biosynthesis; lipid IV(A) from (3R)-3-hydroxytetradecanoyl-[acyl-carrier-protein] and UDP-N-acetyl-alpha-D-glucosamine: step 6/6. Its function is as follows. Transfers the gamma-phosphate of ATP to the 4'-position of a tetraacyldisaccharide 1-phosphate intermediate (termed DS-1-P) to form tetraacyldisaccharide 1,4'-bis-phosphate (lipid IVA). The chain is Tetraacyldisaccharide 4'-kinase from Pseudomonas fluorescens (strain ATCC BAA-477 / NRRL B-23932 / Pf-5).